A 233-amino-acid polypeptide reads, in one-letter code: Protein-L-isoaspartate O-methyltransferase (233 aa).

Serine 83 is an active-site residue.

Belongs to the methyltransferase superfamily. L-isoaspartyl/D-aspartyl protein methyltransferase family.

It localises to the cytoplasm. It carries out the reaction [protein]-L-isoaspartate + S-adenosyl-L-methionine = [protein]-L-isoaspartate alpha-methyl ester + S-adenosyl-L-homocysteine. Catalyzes the methyl esterification of L-isoaspartyl residues in peptides and proteins that result from spontaneous decomposition of normal L-aspartyl and L-asparaginyl residues. It plays a role in the repair and/or degradation of damaged proteins. The sequence is that of Protein-L-isoaspartate O-methyltransferase from Opitutus terrae (strain DSM 11246 / JCM 15787 / PB90-1).